Here is a 68-residue protein sequence, read N- to C-terminus: Conotoxin PnMLKM-011 (68 aa).

The signal sequence occupies residues 1-17 (MGVVLFIFLVLFPLATL). A propeptide spanning residues 18 to 51 (QLDPDQPVERYAENKQLLNPDERRGIILHALGQR) is cleaved from the precursor. 3 cysteine pairs are disulfide-bonded: Cys53-Cys65, Cys54-Cys63, and Cys59-Cys66. Position 67 is a leucine amide (Leu67).

This sequence belongs to the conotoxin M superfamily. In terms of tissue distribution, expressed by the venom duct.

Its subcellular location is the secreted. The protein is Conotoxin PnMLKM-011 of Conus pennaceus (Feathered cone).